We begin with the raw amino-acid sequence, 285 residues long: ATP phosphoribosyltransferase (285 aa).

Belongs to the ATP phosphoribosyltransferase family. Long subfamily. Mg(2+) serves as cofactor.

It is found in the cytoplasm. The catalysed reaction is 1-(5-phospho-beta-D-ribosyl)-ATP + diphosphate = 5-phospho-alpha-D-ribose 1-diphosphate + ATP. Its pathway is amino-acid biosynthesis; L-histidine biosynthesis; L-histidine from 5-phospho-alpha-D-ribose 1-diphosphate: step 1/9. Its activity is regulated as follows. Feedback inhibited by histidine. In terms of biological role, catalyzes the condensation of ATP and 5-phosphoribose 1-diphosphate to form N'-(5'-phosphoribosyl)-ATP (PR-ATP). Has a crucial role in the pathway because the rate of histidine biosynthesis seems to be controlled primarily by regulation of HisG enzymatic activity. The sequence is that of ATP phosphoribosyltransferase from Sulfurisphaera tokodaii (strain DSM 16993 / JCM 10545 / NBRC 100140 / 7) (Sulfolobus tokodaii).